The primary structure comprises 385 residues: Cytochrome b (385 aa).

4 helical membrane passes run Phe32 to Met52, Trp76 to Gly98, Thr113 to Val133, and Phe179 to Ile199. Positions 82 and 96 each coordinate heme b. The heme b site is built by His183 and His197. Residue His202 participates in a ubiquinone binding. 4 helical membrane passes run Phe226–Phe246, Leu290–Asp310, Leu322–Ala342, and Phe349–Pro369.

Belongs to the cytochrome b family. Fungal cytochrome b-c1 complex contains 10 subunits; 3 respiratory subunits, 2 core proteins and 5 low-molecular weight proteins. Cytochrome b-c1 complex is a homodimer. Heme b is required as a cofactor.

The protein localises to the mitochondrion inner membrane. Component of the ubiquinol-cytochrome c reductase complex (complex III or cytochrome b-c1 complex) that is part of the mitochondrial respiratory chain. The b-c1 complex mediates electron transfer from ubiquinol to cytochrome c. Contributes to the generation of a proton gradient across the mitochondrial membrane that is then used for ATP synthesis. This is Cytochrome b (cob) from Aspergillus terreus (strain NIH 2624 / FGSC A1156).